Reading from the N-terminus, the 310-residue chain is MKPKIFIDGEHGTTGLQIRTRMAGRTDLELLSIPEAERRNAAMREDLLNSADIAILCLPDDASREAVAMVAGNNRVRIIDTSTAHRVAPDWAYGFAEMDKAQPRKIRDARHVANPGCYPTGAIALIRPLRQAGILPDGYPVTVNAVSGYTGGGKQMIAQIEDDKSPDHIRAPHFLYGLTLKHKHVPEMKMHGLLERAPVFSPSVGKFAQGMIVQVPLYVDDLAAGATIESIHRALVDHYAGQSIVEVVPLEESAKLARIDATELAGKDTMKLFVFGTDGGAHVNMVALLDNLGKGASGAAVQNMDLMLSA.

Residue C117 is part of the active site.

This sequence belongs to the NAGSA dehydrogenase family. Type 2 subfamily.

Its subcellular location is the cytoplasm. It catalyses the reaction N-acetyl-L-glutamate 5-semialdehyde + phosphate + NADP(+) = N-acetyl-L-glutamyl 5-phosphate + NADPH + H(+). It functions in the pathway amino-acid biosynthesis; L-arginine biosynthesis; N(2)-acetyl-L-ornithine from L-glutamate: step 3/4. In terms of biological role, catalyzes the NADPH-dependent reduction of N-acetyl-5-glutamyl phosphate to yield N-acetyl-L-glutamate 5-semialdehyde. This Sinorhizobium medicae (strain WSM419) (Ensifer medicae) protein is N-acetyl-gamma-glutamyl-phosphate reductase.